The chain runs to 602 residues: uncharacterized protein (602 aa).

One can recognise an MCM domain in the interval 271 to 472 (IIDILADILI…RDEEVAKYIF (202 aa)). An ATP-binding site is contributed by 315–322 (TEVGIDKT).

Belongs to the MCM family.

This is an uncharacterized protein from Methanocaldococcus jannaschii (strain ATCC 43067 / DSM 2661 / JAL-1 / JCM 10045 / NBRC 100440) (Methanococcus jannaschii).